Reading from the N-terminus, the 991-residue chain is Pro-apoptotic serine protease NMA111 (991 aa).

The tract at residues 1 to 57 is disordered; sequence MTVGKRKLSNGTVNEAKRLDDHVPVVAPSTNPDFENANGEDNEDIDDYSSEGEMSPQ. Over residues 38–50 the composition is skewed to acidic residues; it reads NGEDNEDIDDYSS. A serine protease region spans residues 86 to 269; that stretch reads HVSNFDTESS…LPVYRPLRAL (184 aa). Active-site charge relay system residues include His117, Asp148, and Ser231. 2 PDZ domains span residues 296 to 374 and 885 to 957; these read RRLG…QRNG and PHHG…VSFD.

Belongs to the peptidase S1C family.

It is found in the nucleus. Nuclear serine protease which mediates apoptosis. This is Pro-apoptotic serine protease NMA111 (NMA111) from Meyerozyma guilliermondii (strain ATCC 6260 / CBS 566 / DSM 6381 / JCM 1539 / NBRC 10279 / NRRL Y-324) (Yeast).